We begin with the raw amino-acid sequence, 156 residues long: ATP synthase subunit b (156 aa).

A helical membrane pass occupies residues 7-27 (LFVQAIVFLILVLFTMKFVWP).

This sequence belongs to the ATPase B chain family. F-type ATPases have 2 components, F(1) - the catalytic core - and F(0) - the membrane proton channel. F(1) has five subunits: alpha(3), beta(3), gamma(1), delta(1), epsilon(1). F(0) has three main subunits: a(1), b(2) and c(10-14). The alpha and beta chains form an alternating ring which encloses part of the gamma chain. F(1) is attached to F(0) by a central stalk formed by the gamma and epsilon chains, while a peripheral stalk is formed by the delta and b chains.

The protein localises to the cell inner membrane. Functionally, f(1)F(0) ATP synthase produces ATP from ADP in the presence of a proton or sodium gradient. F-type ATPases consist of two structural domains, F(1) containing the extramembraneous catalytic core and F(0) containing the membrane proton channel, linked together by a central stalk and a peripheral stalk. During catalysis, ATP synthesis in the catalytic domain of F(1) is coupled via a rotary mechanism of the central stalk subunits to proton translocation. Its function is as follows. Component of the F(0) channel, it forms part of the peripheral stalk, linking F(1) to F(0). This Delftia acidovorans (strain DSM 14801 / SPH-1) protein is ATP synthase subunit b.